Consider the following 417-residue polypeptide: Serine hydroxymethyltransferase (417 aa).

Residues Leu121 and 125-127 each bind (6S)-5,6,7,8-tetrahydrofolate; that span reads GHL. N6-(pyridoxal phosphate)lysine is present on Lys230. 355 to 357 lines the (6S)-5,6,7,8-tetrahydrofolate pocket; sequence SPF.

Belongs to the SHMT family. In terms of assembly, homodimer. It depends on pyridoxal 5'-phosphate as a cofactor.

It localises to the cytoplasm. It catalyses the reaction (6R)-5,10-methylene-5,6,7,8-tetrahydrofolate + glycine + H2O = (6S)-5,6,7,8-tetrahydrofolate + L-serine. It functions in the pathway one-carbon metabolism; tetrahydrofolate interconversion. Its pathway is amino-acid biosynthesis; glycine biosynthesis; glycine from L-serine: step 1/1. Functionally, catalyzes the reversible interconversion of serine and glycine with tetrahydrofolate (THF) serving as the one-carbon carrier. This reaction serves as the major source of one-carbon groups required for the biosynthesis of purines, thymidylate, methionine, and other important biomolecules. Also exhibits THF-independent aldolase activity toward beta-hydroxyamino acids, producing glycine and aldehydes, via a retro-aldol mechanism. The sequence is that of Serine hydroxymethyltransferase from Legionella pneumophila (strain Lens).